The primary structure comprises 382 residues: uncharacterized protein (382 aa).

Transmembrane regions (helical) follow at residues 8-28 (VMLLLCGLLLLTLAIAVLNTL), 45-65 (MVSSSYFTGNLVGTLFTGYLI), 75-95 (YLASLIFAAGCVGLGVMVGFW), 102-122 (FIAGIGCAMIWVVVESALMCS), 131-151 (LLAAYMMVYYMGTFLGQLLVS), 157-177 (LLHVLPWVTGMILAGILPLLF), 204-224 (LGVNGCIISGIVLGSLYGLMP), 231-251 (GMANASIGFWMAVLVSAGILG), 270-290 (VQVFVVILGSIAMLTQAAMAP), 291-311 (ALFILGAAGFTLYPVAMAWAC), 325-345 (ALLLSYTVGSLLGPSFAAMLM), and 349-369 (SDNLLFIMIASVSFIYLLMLL).

Belongs to the major facilitator superfamily. YcaD (TC 2.A.1.26) family.

The protein localises to the cell inner membrane. This is an uncharacterized protein from Salmonella newport (strain SL254).